An 87-amino-acid chain; its full sequence is Phosphoribosyl-ATP pyrophosphatase (87 aa).

This sequence belongs to the PRA-PH family.

Its subcellular location is the cytoplasm. It carries out the reaction 1-(5-phospho-beta-D-ribosyl)-ATP + H2O = 1-(5-phospho-beta-D-ribosyl)-5'-AMP + diphosphate + H(+). The protein operates within amino-acid biosynthesis; L-histidine biosynthesis; L-histidine from 5-phospho-alpha-D-ribose 1-diphosphate: step 2/9. This is Phosphoribosyl-ATP pyrophosphatase from Bifidobacterium animalis subsp. lactis (strain AD011).